A 206-amino-acid chain; its full sequence is GTP cyclohydrolase 1 (206 aa).

Zn(2+) is bound by residues cysteine 98, histidine 101, and cysteine 169.

The protein belongs to the GTP cyclohydrolase I family. Toroid-shaped homodecamer, composed of two pentamers of five dimers.

It carries out the reaction GTP + H2O = 7,8-dihydroneopterin 3'-triphosphate + formate + H(+). It functions in the pathway cofactor biosynthesis; 7,8-dihydroneopterin triphosphate biosynthesis; 7,8-dihydroneopterin triphosphate from GTP: step 1/1. This Helicobacter hepaticus (strain ATCC 51449 / 3B1) protein is GTP cyclohydrolase 1.